The following is a 509-amino-acid chain: Citrate synthase 3, peroxisomal (509 aa).

Residues histidine 319, histidine 358, and aspartate 414 contribute to the active site. Positions 485-509 (SKESDKLGQVATSNASRRRLAGSSV) are disordered. The span at 500-509 (SRRRLAGSSV) shows a compositional bias: basic residues.

It belongs to the citrate synthase family. As to expression, widely expressed. Expressed throughout the shoot. Expressed in flower, silique, stem, cauline leaf, young leaf, mature leaf and senescent leaf.

The protein resides in the peroxisome. The enzyme catalyses oxaloacetate + acetyl-CoA + H2O = citrate + CoA + H(+). It functions in the pathway carbohydrate metabolism; tricarboxylic acid cycle; isocitrate from oxaloacetate: step 1/2. Peroxisomal citrate synthase required for the fatty acid respiration in seedlings, citrate being exported from peroxisomes into mitochondria during respiration of triacylglycerol (TAG). Indeed, complete respiration requires the transfer of carbon in the form of citrate from the peroxisome to the mitochondria. This Arabidopsis thaliana (Mouse-ear cress) protein is Citrate synthase 3, peroxisomal (CSY3).